Here is a 450-residue protein sequence, read N- to C-terminus: Signal recognition particle protein (450 aa).

Residues 107–114 (GLQGSGKT), 190–194 (DTAGR), and 248–251 (TKTD) each bind GTP.

This sequence belongs to the GTP-binding SRP family. SRP54 subfamily. As to quaternary structure, part of the signal recognition particle protein translocation system, which is composed of SRP and FtsY. SRP is a ribonucleoprotein composed of Ffh and a 4.5S RNA molecule.

The protein localises to the cytoplasm. The enzyme catalyses GTP + H2O = GDP + phosphate + H(+). Involved in targeting and insertion of nascent membrane proteins into the cytoplasmic membrane. Binds to the hydrophobic signal sequence of the ribosome-nascent chain (RNC) as it emerges from the ribosomes. The SRP-RNC complex is then targeted to the cytoplasmic membrane where it interacts with the SRP receptor FtsY. Interaction with FtsY leads to the transfer of the RNC complex to the Sec translocase for insertion into the membrane, the hydrolysis of GTP by both Ffh and FtsY, and the dissociation of the SRP-FtsY complex into the individual components. This Buchnera aphidicola subsp. Baizongia pistaciae (strain Bp) protein is Signal recognition particle protein.